The primary structure comprises 179 residues: Large ribosomal subunit protein uL5 (179 aa).

This sequence belongs to the universal ribosomal protein uL5 family. Part of the 50S ribosomal subunit; part of the 5S rRNA/L5/L18/L25 subcomplex. Contacts the 5S rRNA and the P site tRNA. Forms a bridge to the 30S subunit in the 70S ribosome.

This is one of the proteins that bind and probably mediate the attachment of the 5S RNA into the large ribosomal subunit, where it forms part of the central protuberance. In the 70S ribosome it contacts protein S13 of the 30S subunit (bridge B1b), connecting the 2 subunits; this bridge is implicated in subunit movement. Contacts the P site tRNA; the 5S rRNA and some of its associated proteins might help stabilize positioning of ribosome-bound tRNAs. The sequence is that of Large ribosomal subunit protein uL5 from Bacillus cereus (strain 03BB102).